The primary structure comprises 860 residues: Leucine--tRNA ligase (860 aa).

The 'HIGH' region signature appears at 42–52; that stretch reads PYPSGRLHMGH. The 'KMSKS' region signature appears at 619–623; sequence KMSKS. Lys-622 contacts ATP.

The protein belongs to the class-I aminoacyl-tRNA synthetase family.

Its subcellular location is the cytoplasm. The enzyme catalyses tRNA(Leu) + L-leucine + ATP = L-leucyl-tRNA(Leu) + AMP + diphosphate. In Escherichia coli O6:K15:H31 (strain 536 / UPEC), this protein is Leucine--tRNA ligase.